The sequence spans 445 residues: Argininosuccinate synthase (445 aa).

ATP contacts are provided by residues 18–26 and A44; that span reads AFSGGLDTS. Y100 lines the L-citrulline pocket. ATP contacts are provided by G130 and T132. 3 residues coordinate L-aspartate: T132, N136, and D137. N136 provides a ligand contact to L-citrulline. D137 serves as a coordination point for ATP. Positions 140 and 193 each coordinate L-citrulline. D195 contacts ATP. L-citrulline-binding residues include T202, E204, and E281.

Belongs to the argininosuccinate synthase family. Type 2 subfamily. In terms of assembly, homotetramer.

It localises to the cytoplasm. The catalysed reaction is L-citrulline + L-aspartate + ATP = 2-(N(omega)-L-arginino)succinate + AMP + diphosphate + H(+). It participates in amino-acid biosynthesis; L-arginine biosynthesis; L-arginine from L-ornithine and carbamoyl phosphate: step 2/3. This chain is Argininosuccinate synthase (argG), found in Pasteurella multocida (strain Pm70).